The following is a 198-amino-acid chain: Large ribosomal subunit protein uL5 (198 aa).

It belongs to the universal ribosomal protein uL5 family. Part of the 50S ribosomal subunit; part of the 5S rRNA/L5/L18/L25 subcomplex. Contacts the 5S rRNA and the P site tRNA. Forms a bridge to the 30S subunit in the 70S ribosome.

Functionally, this is one of the proteins that bind and probably mediate the attachment of the 5S RNA into the large ribosomal subunit, where it forms part of the central protuberance. In the 70S ribosome it contacts protein S13 of the 30S subunit (bridge B1b), connecting the 2 subunits; this bridge is implicated in subunit movement. Contacts the P site tRNA; the 5S rRNA and some of its associated proteins might help stabilize positioning of ribosome-bound tRNAs. This chain is Large ribosomal subunit protein uL5, found in Chlorobium phaeovibrioides (strain DSM 265 / 1930) (Prosthecochloris vibrioformis (strain DSM 265)).